A 145-amino-acid polypeptide reads, in one-letter code: Deoxyuridine 5'-triphosphate nucleotidohydrolase (145 aa).

Substrate-binding positions include 63 to 65 (RSG), Asn76, and 80 to 82 (TID).

The protein belongs to the dUTPase family. It depends on Mg(2+) as a cofactor.

It catalyses the reaction dUTP + H2O = dUMP + diphosphate + H(+). It participates in pyrimidine metabolism; dUMP biosynthesis; dUMP from dCTP (dUTP route): step 2/2. In terms of biological role, this enzyme is involved in nucleotide metabolism: it produces dUMP, the immediate precursor of thymidine nucleotides and it decreases the intracellular concentration of dUTP so that uracil cannot be incorporated into DNA. In Chlamydia pneumoniae (Chlamydophila pneumoniae), this protein is Deoxyuridine 5'-triphosphate nucleotidohydrolase.